A 363-amino-acid chain; its full sequence is Glutamate 5-kinase (363 aa).

ATP is bound at residue Lys6. Substrate contacts are provided by Ser46, Asp133, and Asn145. ATP contacts are provided by residues 165 to 166 (TD) and 207 to 213 (TGGMHTK). The region spanning 271–349 (TGRLLLDEGA…RDIEAVLGFT (79 aa)) is the PUA domain.

The protein belongs to the glutamate 5-kinase family.

It localises to the cytoplasm. The catalysed reaction is L-glutamate + ATP = L-glutamyl 5-phosphate + ADP. Its pathway is amino-acid biosynthesis; L-proline biosynthesis; L-glutamate 5-semialdehyde from L-glutamate: step 1/2. Functionally, catalyzes the transfer of a phosphate group to glutamate to form L-glutamate 5-phosphate. In Deinococcus geothermalis (strain DSM 11300 / CIP 105573 / AG-3a), this protein is Glutamate 5-kinase.